The sequence spans 446 residues: Exodeoxyribonuclease 7 large subunit (446 aa).

Belongs to the XseA family. In terms of assembly, heterooligomer composed of large and small subunits.

The protein localises to the cytoplasm. The catalysed reaction is Exonucleolytic cleavage in either 5'- to 3'- or 3'- to 5'-direction to yield nucleoside 5'-phosphates.. Its function is as follows. Bidirectionally degrades single-stranded DNA into large acid-insoluble oligonucleotides, which are then degraded further into small acid-soluble oligonucleotides. The chain is Exodeoxyribonuclease 7 large subunit from Streptococcus agalactiae serotype Ia (strain ATCC 27591 / A909 / CDC SS700).